We begin with the raw amino-acid sequence, 2828 residues long: Matrix-remodeling-associated protein 5 (2828 aa).

The first 26 residues, 1 to 26, serve as a signal peptide directing secretion; that stretch reads MPKRAHWGALSVVLILLWGHPRVALA. Residues 27 to 55 enclose the LRRNT domain; it reads CPHPCACYVPSEVHCTFRSLASVPAGIAK. 6 LRR repeats span residues 56–77, 80–101, 104–125, 128–149, 152–173, and 184–205; these read HVERINLGFNSIQALSETSFAG, KLELLMIHGNEIPSIPDGALRD, SLQVFKFSYNKLRVITGQTLQG, NLMRLHIDHNKIEFIHPQAFNG, SLRLLHLEGNLLHQLHPSTFST, and TIRHLYLAENMVRTLPASMLRN. Positions 217–277 constitute an LRRCT domain; the sequence is NPWTCDCEMR…HKLKDMTCLK (61 aa). 2 N-linked (GlcNAc...) asparagine glycosylation sites follow: asparagine 287 and asparagine 321. 2 Ig-like C2-type domains span residues 481–571 and 575–669; these read PSGA…YRVL and PSTQ…ITVT. Cystine bridges form between cysteine 501–cysteine 555 and cysteine 599–cysteine 651. Residue asparagine 633 is glycosylated (N-linked (GlcNAc...) asparagine). Disordered regions lie at residues 671–715, 933–962, 1068–1190, 1204–1275, and 1367–1389; these read KGSG…RRLL, KPTHEETATEGWSAADVGSSPEPTSSEYEP, QGGN…APDI, AWVD…SSET, and EESSPVGFPGTPTWNPSRTAQPG. A compositionally biased stretch (acidic residues) spans 695–708; it reads IVEDEGGSGMGDEE. Serine 702 carries an O-linked (Xyl...) (chondroitin sulfate) serine glycan. The span at 951 to 962 shows a compositional bias: low complexity; sequence SSPEPTSSEYEP. The span at 1090-1107 shows a compositional bias: polar residues; that stretch reads SKSITLPDSTLGIMSSMS. The span at 1146 to 1168 shows a compositional bias: basic residues; the sequence is PSRRRPNGRRRLRPNKFRHRHKQ. 2 stretches are compositionally biased toward polar residues: residues 1169 to 1190 and 1204 to 1214; these read TPPTTFAPSETFSTQPTQAPDI and AWVDNTVNTPK. Residues 1229–1243 are compositionally biased toward basic residues; it reads TPRRKHGKRPNKHRY. A glycan (N-linked (GlcNAc...) asparagine) is linked at asparagine 1403. The stretch at 1410 to 1434 is one LRR 7 repeat; it reads LKELEDVDFTSEFLSSLTVSTPFHQ. Disordered stretches follow at residues 1479 to 1499, 1536 to 1566, 1579 to 1603, 1669 to 1689, and 1700 to 1719; these read QNHTPTAARMKEPASSSPSTI, NPETEATPVNNEGTQHMSGPNELSTPSSDQD, QVFGSRSLPRGPDSQRQDGRVHASH, STTIPLPLHMSKPSIPSKFTD, and KVFGNNNIPEARNPVGKPPS. The span at 1542-1566 shows a compositional bias: polar residues; it reads TPVNNEGTQHMSGPNELSTPSSDQD. Asparagine 1735 is a glycosylation site (N-linked (GlcNAc...) asparagine). Ig-like C2-type domains are found at residues 1853 to 1946, 1950 to 2041, 2046 to 2140, 2146 to 2239, 2242 to 2343, 2345 to 2432, 2440 to 2534, 2542 to 2630, 2637 to 2722, and 2733 to 2828; these read PQIL…LSVT, PQIL…IRLH, PPVI…LNVQ, ARIT…VDVV, PAKI…KVVT, PATI…KTVW, PKIN…LQLT, PIFH…RLVS, PEAN…PSVT, and PRIT…IHVF. Intrachain disulfides connect cysteine 1875/cysteine 1928 and cysteine 1972/cysteine 2025. N-linked (GlcNAc...) asparagine glycans are attached at residues asparagine 2007 and asparagine 2056. 8 disulfide bridges follow: cysteine 2069-cysteine 2122, cysteine 2168-cysteine 2221, cysteine 2265-cysteine 2324, cysteine 2368-cysteine 2418, cysteine 2466-cysteine 2518, cysteine 2564-cysteine 2616, cysteine 2659-cysteine 2711, and cysteine 2755-cysteine 2810. Asparagine 2693 carries N-linked (GlcNAc...) asparagine glycosylation.

In terms of tissue distribution, detected in placenta (at protein level). Detected in cerebrospinal fluid and fibroblasts (at protein level). Highly expressed in kidney, also detected on liver and spleen. Expressed by proximal tubular cells of the kidney (at protein level). Expression highly increases during chronic kidney disease and autosomal dominant polycystic kidney disease, where is detected in cysts.

The protein localises to the secreted. In kidney, has anti-inflammatory and anti-fibrotic properties by limiting the induction of chemokines, fibronectin and collagen expression in response to TGB1 and pro-inflammatory stimuli. This chain is Matrix-remodeling-associated protein 5 (MXRA5), found in Homo sapiens (Human).